A 233-amino-acid chain; its full sequence is Small ribosomal subunit protein uS2 (233 aa).

The protein belongs to the universal ribosomal protein uS2 family.

This is Small ribosomal subunit protein uS2 from Bacillus cereus (strain G9842).